A 1110-amino-acid chain; its full sequence is Guanylate cyclase 2D (1110 aa).

The signal sequence occupies residues 1–66 (MAGLQQGCHP…ADSLSLPAWA (66 aa)). At 67 to 475 (RETFTLGVLG…PNTLCIRGVQ (409 aa)) the chain is on the extracellular side. The cysteines at positions 121 and 149 are disulfide-linked. N-linked (GlcNAc...) asparagine glycans are attached at residues Asn-304 and Asn-374. Residues 476–500 (PLGSLLTLTITCVLALVGGFLAYFI) traverse the membrane as a helical segment. Residues 501-1110 (RLGLQQLRLL…TGFAKLARVG (610 aa)) are Cytoplasmic-facing. A disordered region spans residues 529–556 (TPSRRRPHVDSGSESRSVVDGGSPQSVI). A Protein kinase domain is found at 541–818 (SESRSVVDGG…PSLDQIYTQF (278 aa)). An interaction with NCALD region spans residues 880–921 (MGTTVEPEYFDQVTIYFSDIVGFTTISALSEPIEVVGFLNDL). In terms of domain architecture, Guanylate cyclase spans 893-1023 (TIYFSDIVGF…DTVNTASRME (131 aa)).

Belongs to the adenylyl cyclase class-4/guanylyl cyclase family. In terms of assembly, interacts (via the catalytic domain) with NCALD. Specifically expressed in a subpopulation of olfactory sensory neurons. Expressed in the cilia of the olfactory epithelium.

The protein resides in the cell projection. The protein localises to the cilium membrane. It carries out the reaction GTP = 3',5'-cyclic GMP + diphosphate. With respect to regulation, activated by Ca(2+). Activated by NCALD in a Ca(2+)-dependent fashion. In terms of biological role, functions as an olfactory receptor activated by a urine odorant, uroguanylin. Activated as well by the volatile semiochemicals carbon disulfide (CS2) and carbon dioxide (CO2). Has guanylate cyclase activity upon binding of the ligand. Activation of GUCY2D neurons leads to the cGMP-dependent activation of the CNGA3 channels, membrane depolarization and an increase in action potential frequency. Signaling pathways activated by GUCY2D may trigger social behaviors such as acquisition of food preference. This Rattus norvegicus (Rat) protein is Guanylate cyclase 2D (Gucy2d).